The sequence spans 434 residues: Eukaryotic peptide chain release factor subunit 1-2 (434 aa).

Ala2 carries the N-acetylalanine modification.

This sequence belongs to the eukaryotic release factor 1 family. As to quaternary structure, heterodimer of two subunits, one of which binds GTP.

The protein resides in the cytoplasm. Its function is as follows. Directs the termination of nascent peptide synthesis (translation) in response to the termination codons UAA, UAG and UGA. Modulates plant growth and development. The sequence is that of Eukaryotic peptide chain release factor subunit 1-2 from Arabidopsis thaliana (Mouse-ear cress).